The sequence spans 324 residues: Phospho-N-acetylmuramoyl-pentapeptide-transferase (324 aa).

10 consecutive transmembrane segments (helical) span residues 5 to 25 (GLLV…PLFI), 52 to 72 (PTMG…IMAI), 77 to 97 (LGAE…IGFL), 122 to 142 (VIAI…YIMI), 149 to 169 (FELG…GSNA), 176 to 196 (LDGL…IIAV), 201 to 221 (FGVA…LVFN), 227 to 247 (VFMG…VAIL), 253 to 273 (LLVI…IQVI), and 302 to 322 (VVVT…YIGV).

This sequence belongs to the glycosyltransferase 4 family. MraY subfamily. It depends on Mg(2+) as a cofactor.

It is found in the cell membrane. The catalysed reaction is UDP-N-acetyl-alpha-D-muramoyl-L-alanyl-gamma-D-glutamyl-meso-2,6-diaminopimeloyl-D-alanyl-D-alanine + di-trans,octa-cis-undecaprenyl phosphate = di-trans,octa-cis-undecaprenyl diphospho-N-acetyl-alpha-D-muramoyl-L-alanyl-D-glutamyl-meso-2,6-diaminopimeloyl-D-alanyl-D-alanine + UMP. It participates in cell wall biogenesis; peptidoglycan biosynthesis. In terms of biological role, catalyzes the initial step of the lipid cycle reactions in the biosynthesis of the cell wall peptidoglycan: transfers peptidoglycan precursor phospho-MurNAc-pentapeptide from UDP-MurNAc-pentapeptide onto the lipid carrier undecaprenyl phosphate, yielding undecaprenyl-pyrophosphoryl-MurNAc-pentapeptide, known as lipid I. The protein is Phospho-N-acetylmuramoyl-pentapeptide-transferase of Bacillus anthracis.